The primary structure comprises 200 residues: Outer-membrane lipoprotein carrier protein (200 aa).

The signal sequence occupies residues 1–18; the sequence is MIGLFLAAPLVLSSAVWA.

It belongs to the LolA family. In terms of assembly, monomer.

It is found in the periplasm. Functionally, participates in the translocation of lipoproteins from the inner membrane to the outer membrane. Only forms a complex with a lipoprotein if the residue after the N-terminal Cys is not an aspartate (The Asp acts as a targeting signal to indicate that the lipoprotein should stay in the inner membrane). This is Outer-membrane lipoprotein carrier protein from Photobacterium profundum (strain SS9).